Reading from the N-terminus, the 590-residue chain is Enhancer of polycomb-like protein 1 (590 aa).

2 disordered regions span residues 302–335 (DEDLVNQKPQKRKPVEPPVVRQPTGAHLRQPVRS) and 471–497 (TPPRELGEDRSDRWKYDSDSDDEEPPV). The span at 475 to 488 (ELGEDRSDRWKYDS) shows a compositional bias: basic and acidic residues.

Belongs to the enhancer of polycomb family. Component of the NuA4 histone acetyltransferase complex.

It is found in the nucleus. Its function is as follows. Component of the NuA4 histone acetyltransferase complex which is involved in transcriptional activation of selected genes principally by acetylation of nucleosomal histone H4 and H2A. The NuA4 complex is also involved in DNA repair. Involved in gene silencing by neighboring heterochromatin, blockage of the silencing spreading along the chromosome, and required for cell cycle progression through G2/M. The sequence is that of Enhancer of polycomb-like protein 1 (EPL1) from Gibberella zeae (strain ATCC MYA-4620 / CBS 123657 / FGSC 9075 / NRRL 31084 / PH-1) (Wheat head blight fungus).